Reading from the N-terminus, the 549-residue chain is Glucose-6-phosphate isomerase (549 aa).

Residue Glu355 is the Proton donor of the active site. Catalysis depends on residues His386 and Lys514.

Belongs to the GPI family.

The protein localises to the cytoplasm. It catalyses the reaction alpha-D-glucose 6-phosphate = beta-D-fructose 6-phosphate. It participates in carbohydrate biosynthesis; gluconeogenesis. It functions in the pathway carbohydrate degradation; glycolysis; D-glyceraldehyde 3-phosphate and glycerone phosphate from D-glucose: step 2/4. Catalyzes the reversible isomerization of glucose-6-phosphate to fructose-6-phosphate. This Sodalis glossinidius (strain morsitans) protein is Glucose-6-phosphate isomerase.